Reading from the N-terminus, the 158-residue chain is NAD(P)H-quinone oxidoreductase subunit J, chloroplastic (158 aa).

Belongs to the complex I 30 kDa subunit family. As to quaternary structure, NDH is composed of at least 16 different subunits, 5 of which are encoded in the nucleus.

It is found in the plastid. The protein resides in the chloroplast thylakoid membrane. The catalysed reaction is a plastoquinone + NADH + (n+1) H(+)(in) = a plastoquinol + NAD(+) + n H(+)(out). It catalyses the reaction a plastoquinone + NADPH + (n+1) H(+)(in) = a plastoquinol + NADP(+) + n H(+)(out). NDH shuttles electrons from NAD(P)H:plastoquinone, via FMN and iron-sulfur (Fe-S) centers, to quinones in the photosynthetic chain and possibly in a chloroplast respiratory chain. The immediate electron acceptor for the enzyme in this species is believed to be plastoquinone. Couples the redox reaction to proton translocation, and thus conserves the redox energy in a proton gradient. In Lupinus luteus (European yellow lupine), this protein is NAD(P)H-quinone oxidoreductase subunit J, chloroplastic.